The chain runs to 28 residues: C-hordein (28 aa).

The disordered stretch occupies residues 1-28 (RQLNPSSQELQSPQQSYLQQPYPQNPYL).

As to expression, developing endosperm.

Its function is as follows. Sulfur-poor seed storage protein. The chain is C-hordein from Hordeum vulgare subsp. spontaneum (Wild barley).